We begin with the raw amino-acid sequence, 181 residues long: ECF RNA polymerase sigma factor EcfG (181 aa).

The sigma-70 factor domain-2 stretch occupies residues 15–77 (VPSLRAFAIS…FRSDYRKRRR (63 aa)). Positions 103-155 (EEFRAALDKLPQDQREALILVGASGFSYEDAAAICGCAVGTIKSRVNRARSKL) are sigma-70 factor domain-4.

It belongs to the sigma-70 factor family. ECF subfamily.

Sigma factors are initiation factors that promote the attachment of RNA polymerase to specific initiation sites and are then released. Regulates expression of hpnP under a variety of stresses, including high temperature, pH stress, and presence of nonionic osmolytes. This is ECF RNA polymerase sigma factor EcfG from Rhodopseudomonas palustris (strain TIE-1).